A 463-amino-acid polypeptide reads, in one-letter code: Probable mannan endo-1,4-beta-mannosidase F (463 aa).

Positions 1-18 (MRSLSSIALLSVVGAASA) are cleaved as a signal peptide. The CBM1 domain occupies 19–54 (QAGPWAQCGGKSFSGSSECASGWKCQELNEWFSQCV). Residues 57–78 (AESTTPTVSSTPTPTDAPSVSI) form a disordered region. Low complexity predominate over residues 59–77 (STTPTVSSTPTPTDAPSVS). Residues 75 to 118 (SVSITASVTTGINKSISVSSASKSTPLPSSSSASPSPRPTGSGS) are ser-rich linker. N87 carries an N-linked (GlcNAc...) asparagine glycan. Residues 93-118 (SSASKSTPLPSSSSASPSPRPTGSGS) show a composition bias toward low complexity. A disordered region spans residues 93 to 121 (SSASKSTPLPSSSSASPSPRPTGSGSFAK). Residues 119–463 (FAKADGLQFS…MDHMENVNKN (345 aa)) are catalytic. 2 residues coordinate substrate: W171 and N285. Residue E286 is the Proton donor/acceptor of the active site. Residue Y361 coordinates substrate. Residue E395 is the Nucleophile of the active site. W424 is a binding site for substrate.

This sequence belongs to the glycosyl hydrolase 5 (cellulase A) family.

The protein resides in the secreted. It carries out the reaction Random hydrolysis of (1-&gt;4)-beta-D-mannosidic linkages in mannans, galactomannans and glucomannans.. Its function is as follows. Endo-1,4-mannanase, a crucial enzyme for depolymerization of seed galactomannans and wood galactoglucomannans. In Aspergillus oryzae (strain ATCC 42149 / RIB 40) (Yellow koji mold), this protein is Probable mannan endo-1,4-beta-mannosidase F (manF).